The following is a 185-amino-acid chain: Elongation factor P (185 aa).

This sequence belongs to the elongation factor P family.

It is found in the cytoplasm. It participates in protein biosynthesis; polypeptide chain elongation. Its function is as follows. Involved in peptide bond synthesis. Stimulates efficient translation and peptide-bond synthesis on native or reconstituted 70S ribosomes in vitro. Probably functions indirectly by altering the affinity of the ribosome for aminoacyl-tRNA, thus increasing their reactivity as acceptors for peptidyl transferase. This is Elongation factor P (efp) from Synechococcus elongatus (strain ATCC 33912 / PCC 7942 / FACHB-805) (Anacystis nidulans R2).